The following is a 473-amino-acid chain: Arginine biosynthesis bifunctional protein ArgJ, mitochondrial (473 aa).

Substrate-binding residues include Thr-201, Lys-230, Thr-241, Glu-328, Asn-468, and Thr-473. The active-site Nucleophile is the Thr-241.

Belongs to the ArgJ family. In terms of assembly, heterodimer of an alpha and a beta chain. Post-translationally, the alpha and beta chains are autoproteolytically processed from a single precursor protein within the mitochondrion.

It localises to the mitochondrion matrix. It carries out the reaction N(2)-acetyl-L-ornithine + L-glutamate = N-acetyl-L-glutamate + L-ornithine. It catalyses the reaction L-glutamate + acetyl-CoA = N-acetyl-L-glutamate + CoA + H(+). Its pathway is amino-acid biosynthesis; L-arginine biosynthesis; L-ornithine and N-acetyl-L-glutamate from L-glutamate and N(2)-acetyl-L-ornithine (cyclic): step 1/1. It functions in the pathway amino-acid biosynthesis; L-arginine biosynthesis; N(2)-acetyl-L-ornithine from L-glutamate: step 1/4. Catalyzes two activities which are involved in the cyclic version of arginine biosynthesis: the synthesis of acetylglutamate from glutamate and acetyl-CoA, and of ornithine by transacetylation between acetylornithine and glutamate. In Ajellomyces capsulatus (strain H143) (Darling's disease fungus), this protein is Arginine biosynthesis bifunctional protein ArgJ, mitochondrial.